The sequence spans 353 residues: Protein U67 (353 aa).

It belongs to the herpesviridae UL95 family.

The chain is Protein U67 (U67) from Human herpesvirus 6A (strain Uganda-1102) (HHV-6 variant A).